The chain runs to 411 residues: Serpin A12 (411 aa).

The N-terminal stretch at 1–20 (MNLVLGLGLFLAGLLTVKGL) is a signal peptide. 2 N-linked (GlcNAc...) asparagine glycosylation sites follow: asparagine 92 and asparagine 267. Residues 364-382 (GTEGAAGSGAQTLPMETPR) are reactive center loop.

It belongs to the serpin family. As to quaternary structure, forms a stable complex with KLK7. Glycosylation slightly decreases affinity for heparin, but otherwise has no significant effect on KLK7 inhibitory activity or thermal stability of the protein. As to expression, expressed in visceral adipose tissues.

Its subcellular location is the secreted. With respect to regulation, inhibition of KLK7 is enhanced by heparin. Functionally, adipokine that modulates insulin action by specifically inhibiting its target protease KLK7 in white adipose tissues. The chain is Serpin A12 (Serpina12) from Rattus norvegicus (Rat).